The chain runs to 485 residues: Protein disulfide-isomerase 1 (485 aa).

A signal peptide spans 1-20 (MSLSVSFIFLLVASIGAVVA). Thioredoxin domains are found at residues 21 to 130 (DSEN…KKSG) and 342 to 470 (YLEG…KYAG). Cystine bridges form between Cys-52/Cys-55 and Cys-393/Cys-396. Catalysis depends on nucleophile residues Cys-393 and Cys-396. The Prevents secretion from ER motif lies at 482–485 (HEEL).

The protein belongs to the protein disulfide isomerase family.

It localises to the endoplasmic reticulum lumen. It catalyses the reaction Catalyzes the rearrangement of -S-S- bonds in proteins.. This Caenorhabditis elegans protein is Protein disulfide-isomerase 1 (pdi-1).